Reading from the N-terminus, the 691-residue chain is DNA ligase (691 aa).

NAD(+) is bound by residues D41 to D45, S90 to L91, and E130. Catalysis depends on K132, which acts as the N6-AMP-lysine intermediate. NAD(+) is bound by residues R153, E190, K307, and K331. Residues C425, C428, C443, and C449 each contribute to the Zn(2+) site. A BRCT domain is found at A610 to R691.

It belongs to the NAD-dependent DNA ligase family. LigA subfamily. It depends on Mg(2+) as a cofactor. Mn(2+) serves as cofactor.

The enzyme catalyses NAD(+) + (deoxyribonucleotide)n-3'-hydroxyl + 5'-phospho-(deoxyribonucleotide)m = (deoxyribonucleotide)n+m + AMP + beta-nicotinamide D-nucleotide.. In terms of biological role, DNA ligase that catalyzes the formation of phosphodiester linkages between 5'-phosphoryl and 3'-hydroxyl groups in double-stranded DNA using NAD as a coenzyme and as the energy source for the reaction. It is essential for DNA replication and repair of damaged DNA. This Burkholderia pseudomallei (strain K96243) protein is DNA ligase.